We begin with the raw amino-acid sequence, 178 residues long: Alkyl hydroperoxide reductase AhpD (178 aa).

Cys130 acts as the Proton donor in catalysis. Residues Cys130 and Cys133 are joined by a disulfide bond. Cys133 serves as the catalytic Cysteine sulfenic acid (-SOH) intermediate.

It belongs to the AhpD family. As to quaternary structure, homotrimer.

The catalysed reaction is N(6)-[(R)-dihydrolipoyl]-L-lysyl-[lipoyl-carrier protein] + a hydroperoxide = N(6)-[(R)-lipoyl]-L-lysyl-[lipoyl-carrier protein] + an alcohol + H2O. Antioxidant protein with alkyl hydroperoxidase activity. Required for the reduction of the AhpC active site cysteine residues and for the regeneration of the AhpC enzyme activity. The chain is Alkyl hydroperoxide reductase AhpD from Mycolicibacterium paratuberculosis (strain ATCC BAA-968 / K-10) (Mycobacterium paratuberculosis).